A 1355-amino-acid chain; its full sequence is Ecdysone-induced protein 75B, isoform A (1355 aa).

Disordered regions lie at residues 60-91, 126-228, 248-268, and 308-344; these read QHQP…QQHS, RLKN…DSSY, ELEQ…EAKP, and ATQQ…NSSA. The segment covering 66 to 76 has biased composition (basic residues); it reads QLHHQHQHQHQ. Low complexity-rich tracts occupy residues 77 to 91 and 143 to 179; these read HQQQ…QQHS and TLVK…QHQQ. Positions 200–213 are enriched in acidic residues; the sequence is SGIDEDSPNSDEDC. Polar residues-rich tracts occupy residues 218 to 228 and 254 to 264; these read PAGTSLEDSSY and TTGGSNAQQQV. 2 stretches are compositionally biased toward low complexity: residues 308-321 and 330-344; these read ATQQ…QHQH and DSNC…NSSA. Positions 384-474 form a DNA-binding region, nuclear receptor; sequence SQLNYLCQKF…VGMSRDAVRF (91 aa). The NR C4-type; degenerate zinc finger occupies 387–421; sequence NYLCQKFDEKLDTALSNSSANTGRNTPAVTANEDA. The NR C4-type zinc finger occupies 438 to 457; the sequence is CTKNQQCSILRINRNRCQYC. The NR LBD domain occupies 508 to 756; it reads DQPRLLAAVL…QQMWSMEDGN (249 aa). 6 disordered regions span residues 780–821, 927–964, 987–1007, 1051–1117, 1147–1260, and 1312–1344; these read KSPL…SALA, LDSP…SVDD, VSVS…KRQI, AEAD…SSHS, ENST…SNSA, and TVTA…NPGL. Low complexity-rich tracts occupy residues 797 to 809, 948 to 960, 987 to 1001, 1053 to 1098, and 1106 to 1117; these read GSPS…GVSL, SSGG…SPRS, VSVS…STSS, ADAS…AQSQ, and SSPKASMASSHS. Composition is skewed to polar residues over residues 1149-1162 and 1174-1196; these read STAA…VGNR and AVQN…QRQQ. Composition is skewed to low complexity over residues 1197-1233, 1242-1260, and 1315-1343; these read SVSP…SASS, STSN…SNSA, and ASNG…PNPG.

This sequence belongs to the nuclear hormone receptor family. NR1 subfamily.

Its subcellular location is the nucleus. Functionally, implicated in the regulation of ecdysone-triggered gene hierarchies. Probably plays a key role in mediating the regulation of the larval molt by 20-OH-ecdysone. The sequence is that of Ecdysone-induced protein 75B, isoform A (Eip75B) from Drosophila melanogaster (Fruit fly).